The following is a 159-amino-acid chain: Large ribosomal subunit protein eL29 (159 aa).

A compositionally biased stretch (basic residues) spans 1-26 (MAKSKNHTTHNQSRKWHRNGIKKPRS). The segment at 1–32 (MAKSKNHTTHNQSRKWHRNGIKKPRSQRYESL) is disordered. The residue at position 5 (Lys-5) is an N6-methyllysine. Residue Ser-31 is modified to Phosphoserine. N6-acetyllysine is present on Lys-33. The segment covering 117–127 (RLCRPKAKAKA) has biased composition (basic residues). The tract at residues 117 to 159 (RLCRPKAKAKAKAKDQTKAQAAAPASVPAQAPKRTQAPTKASE) is disordered. A compositionally biased stretch (low complexity) spans 134-149 (KAQAAAPASVPAQAPK). Ser-142 is subject to Phosphoserine.

This sequence belongs to the eukaryotic ribosomal protein eL29 family. Component of the large ribosomal subunit.

Its subcellular location is the cytoplasm. Functionally, component of the large ribosomal subunit. The ribosome is a large ribonucleoprotein complex responsible for the synthesis of proteins in the cell. The chain is Large ribosomal subunit protein eL29 (RPL29) from Homo sapiens (Human).